The following is an 84-amino-acid chain: U8-theraphotoxin-Hhn1c 3 (84 aa).

The N-terminal stretch at 1–21 (MKVALIVCLVWVMAMMELVSC) is a signal peptide. 5 disulfide bridges follow: cysteine 23/cysteine 35, cysteine 29/cysteine 44, cysteine 34/cysteine 67, cysteine 54/cysteine 75, and cysteine 69/cysteine 81.

It belongs to the AVIT (prokineticin) family. In terms of tissue distribution, expressed by the venom gland.

It is found in the secreted. The chain is U8-theraphotoxin-Hhn1c 3 from Cyriopagopus hainanus (Chinese bird spider).